The chain runs to 428 residues: tRNA(Ile2) 2-agmatinylcytidine synthetase TiaS (428 aa).

Belongs to the TiaS family.

Its subcellular location is the cytoplasm. The catalysed reaction is cytidine(34) in tRNA(Ile2) + agmatine + ATP + H2O = 2-agmatinylcytidine(34) in tRNA(Ile2) + AMP + 2 phosphate + 2 H(+). ATP-dependent agmatine transferase that catalyzes the formation of 2-agmatinylcytidine (agm2C) at the wobble position (C34) of tRNA(Ile2), converting the codon specificity from AUG to AUA. This chain is tRNA(Ile2) 2-agmatinylcytidine synthetase TiaS, found in Methanosarcina mazei (strain ATCC BAA-159 / DSM 3647 / Goe1 / Go1 / JCM 11833 / OCM 88) (Methanosarcina frisia).